Here is a 2242-residue protein sequence, read N- to C-terminus: MATLFLDDGSSFKGRLFGASSTVSGEVVFQTGMVGYPEALTDPSYLSQILVLTYPLIGNYGIPKDEEDEHGLSKWFESAKIHAAALVIGENSQNPSHWSSVRSLDQRLKEHGIPALEGIDTRSLTKKIREKGTLLGKLVIDGTDENSLPYDDPNKRHLVKEVSIKEPKVYHPSGNVKIMAVDCGMKYNQIRSLCKRGAAVTVVPWDYLFDSNEFDGLFISNGPGDPEYCQQTINNVKKAISEEKPKPLFGICLGHQILSLAIGAKTYKMKYGNRGHNQPCIHEGTQRCFYTSQNHGFAVEPCSLPRDWSVLFTNANDQSNEGIIHNSKPLFSVQFHPEHKAGPTDLVDLFDIFLECARDVKLGVNLDKTVKGRVISHYSFKNGTENSKTPPGRIQPHKVLILGSGGLSIGQAGEFDYSGSQAIKALKEENVQSVLINPNIATVQTSKGLADKVYFLPITPEYVTQVIMNERPDGILLTFGGQTALNCGVELQKRGVLEKYHVRVLGTPVSSIEMTEDRKIFVEKMAEINEYVVPSEAAFTLEQAQGAAERLGYPVLVRAAFALGGLGSGFAQNKEELVTLVTQAFAHTSQILVDKSLKGWKEIEYEVVRDAYDNCITVCNMENVDPLGIHTGESIVVAPSQTLNDKEYNLLRTTAIKVIRHLGVVGECNIQYALSPESEQYFIIEVNARLSRSSALASKATGYPLAYVAAKLALGIPLPVLRNSVTNSTTANYEPSLDYCVVKVPRWDLSKFLRLSTKIGSSMKSVGEVMAIGRNFEEAFQKALRMVDENCVGFDHTLKPASDEELETPTDKRIFVLAAALRAGYEIDRLYELTKIDKWFLHKMKNIVEYSLKLSELYMKDEVPRHDLLKVKRLGFSDKQIAMAIQSTELAVRRLRQEWKILPVVKQIDTVAAEWPAQTNYLYLTYNGEGHDLDFTKPHVMVIGSGVYRIGSSVEFDWCAVRCIQQLRKMGYKTRMVNYNPETVSTDYDMCDRLYFDEISFEVVMDIYELENPEGIILSMGGQLPNNIAMDLHRQQCRILGTSPESIDTAENRFKFSRMLDTIGISQPRWKELSDTESSKQFCTKVGYPCLIRPSYVLSGVAMNVAYSDNDLEKFLSSAVAVSKEHPVVISKFIQEAKEIDVDAVACDGVVIAVAISEHVENAGVHSGDATLVTPPQDLNQKTTERIKAIVHAIGQELQATGPFNLQLIAKDDQLKVIECNVRVSRSFPFVSKTLGVDMIALATKVIMGEEVEPVGLMTGTGVVGVKVPQFSFSRLAGADVVLGVEMTSTGEVACFGENRYEAYLKAMLSTGFKIPKKNILLSIGSYKNKSELLSTVQSLEQLGYNLYASLGTADFYTEHGVKIKAVDWPFEDTDNGCPLKERHRNIMDYLEENHFDLVINLSMRNSGGRRLSSFVTKGYRTRRLAVDYSVPLIIDIKCTKLFVEALRLVGDTPPVKTHIDSMSSHKLIRLPGLIDVHVHLREPGGTHKEDFASGTAAALAGGVTMVCAMPNTNPAITDQTSFALVQKLATAGARCDFALFLGASSDNADVLPLISNSAAGLKMYLNDTFSTLKMDNVSLWMEHFEKWPKHLPIVVHAERQTVAAILMVAQLYQRPVHICHVARKEEIQIIRAAKQKGVQVTCEVAPHHLFLNEEDLESIGHGKGQVRPMLSTKEDVNALWENLDVIDCFATDHAPHSVEEKNSDSPPPGYPGLETMLPLLLTAVSEGRLTIDDLVKRLYENPRKIFSLPVQENTYVEVDLEQEWIIPSYMQFTKSKWTPFEGKKVKGRVRRVVLRGEVAYIDGQVLVPPGYGQDVRAWPLGVPLPPPPTTVKTPEHSKPTQTETVRTRTASPRRLASSGPAVDARFHLPPRIHRCSDPGLPNAEGEYKEKPVKKFIEQDTVSQDGYIYPPPVSRLLSPQNLAAQAVPHPYSLLLHPFVGQHILSVKRFTKDQLSHLFNVAHNLRLTVQKDRSLDILKGKVMASMFYEVSTRTSSSFRAAMHRLGGSVIHFSEATSSVQKGESLLDSVQTMSCYVDVVVLRHPEPGAVELAAKHSRKPIINAGDGVGEHPTQALLDIFTIREELGTVNGMTITMVGDLKHGRTVHSLAYLLTLYRVNLRYVTPRNLRMPPNIIRFLASRGIKQEEFDSLEEALPDTDVLYMTRIQKERFASEEEYEACFGQFILTPHIMTKGKKKMVVMHPLPRVNEVSVEVDSDPRAAYFRQAENGMYVRMALLATVLGKF.

Positions 1-365 (MATLFLDDGS…CARDVKLGVN (365 aa)) are GATase (Glutamine amidotransferase). L-glutamine is bound by residues Ser-44, Gly-222, and Gly-224. Residues 177–363 (KIMAVDCGMK…LECARDVKLG (187 aa)) enclose the Glutamine amidotransferase type-1 domain. Cys-252 functions as the Nucleophile; for GATase activity in the catalytic mechanism. L-glutamine contacts are provided by Leu-253, Gln-256, Asn-294, Gly-296, and Phe-297. Residues His-336 and Glu-338 each act as for GATase activity in the active site. The segment at 366 to 397 (LDKTVKGRVISHYSFKNGTENSKTPPGRIQPH) is linker. Positions 398-937 (KVLILGSGGL…GEGHDLDFTK (540 aa)) are CPSase A. The CPSase (Carbamoyl-phosphate synthase) stretch occupies residues 398–1462 (KVLILGSGGL…TPPVKTHIDS (1065 aa)). ATP contacts are provided by Arg-518, Arg-558, Gly-564, Gly-565, Lys-595, Glu-602, Gly-628, Ile-629, His-630, Gln-671, and Glu-685. ATP-grasp domains follow at residues 522 to 714 (VEKM…KLAL) and 1057 to 1248 (SRML…KVIM). Mg(2+) is bound by residues Gln-671, Glu-685, and Asn-687. 3 residues coordinate Mn(2+): Gln-671, Glu-685, and Asn-687. Residues 938–1462 (PHVMVIGSGV…TPPVKTHIDS (525 aa)) form a CPSase B region. Residues Arg-1093, Lys-1132, Ile-1134, Glu-1139, Gly-1164, Val-1165, His-1166, Ser-1167, Gln-1207, and Glu-1219 each contribute to the ATP site. The Mg(2+) site is built by Gln-1207, Glu-1219, and Asn-1221. The Mn(2+) site is built by Gln-1207, Glu-1219, and Asn-1221. The region spanning 1313-1469 (FKIPKKNILL…IDSMSSHKLI (157 aa)) is the MGS-like domain. The tract at residues 1463 to 1796 (MSSHKLIRLP…KGRVRRVVLR (334 aa)) is DHOase (dihydroorotase). Zn(2+)-binding residues include His-1478 and His-1480. (S)-dihydroorotate contacts are provided by Arg-1482 and Asn-1512. 5 residues coordinate Zn(2+): Lys-1563, His-1597, Cys-1620, His-1621, and Glu-1644. An N6-carboxylysine modification is found at Lys-1563. (S)-dihydroorotate is bound at residue Arg-1668. Asp-1693 is a binding site for Zn(2+). Asp-1693 acts as the For DHOase activity in catalysis. Positions 1697 and 1709 each coordinate (S)-dihydroorotate. A linker region spans residues 1797–1934 (GEVAYIDGQV…QAVPHPYSLL (138 aa)). A disordered region spans residues 1829-1862 (PTTVKTPEHSKPTQTETVRTRTASPRRLASSGPA). Polar residues predominate over residues 1840–1851 (PTQTETVRTRTA). The interval 1935–2242 (LHPFVGQHIL…ALLATVLGKF (308 aa)) is ATCase (Aspartate transcarbamylase). Arg-1992 and Thr-1993 together coordinate carbamoyl phosphate. Position 2020 (Lys-2020) interacts with L-aspartate. Arg-2041, His-2069, and Gln-2072 together coordinate carbamoyl phosphate. L-aspartate-binding residues include Arg-2102 and Arg-2163. Residues Leu-2202 and Pro-2203 each contribute to the carbamoyl phosphate site.

It in the N-terminal section; belongs to the CarA family. In the 2nd section; belongs to the CarB family. The protein in the 3rd section; belongs to the metallo-dependent hydrolases superfamily. DHOase family. CAD subfamily. This sequence in the C-terminal section; belongs to the aspartate/ornithine carbamoyltransferase superfamily. ATCase family. Homohexamer. Mg(2+) serves as cofactor. The cofactor is Mn(2+). Requires Zn(2+) as cofactor. As to expression, present in the testis but not in the liver.

The protein resides in the cytoplasm. The protein localises to the nucleus. The catalysed reaction is hydrogencarbonate + L-glutamine + 2 ATP + H2O = carbamoyl phosphate + L-glutamate + 2 ADP + phosphate + 2 H(+). It catalyses the reaction L-glutamine + H2O = L-glutamate + NH4(+). It carries out the reaction hydrogencarbonate + NH4(+) + 2 ATP = carbamoyl phosphate + 2 ADP + phosphate + 2 H(+). The enzyme catalyses carbamoyl phosphate + L-aspartate = N-carbamoyl-L-aspartate + phosphate + H(+). The catalysed reaction is (S)-dihydroorotate + H2O = N-carbamoyl-L-aspartate + H(+). Its pathway is pyrimidine metabolism; UMP biosynthesis via de novo pathway; (S)-dihydroorotate from bicarbonate: step 1/3. The protein operates within pyrimidine metabolism; UMP biosynthesis via de novo pathway; (S)-dihydroorotate from bicarbonate: step 2/3. It participates in pyrimidine metabolism; UMP biosynthesis via de novo pathway; (S)-dihydroorotate from bicarbonate: step 3/3. With respect to regulation, allosterically regulated and controlled by phosphorylation. 5-phosphoribose 1-diphosphate is an activator while UMP is an inhibitor of the CPSase reaction. Functionally, multifunctional protein that encodes the first 3 enzymatic activities of the de novo pyrimidine pathway: carbamoylphosphate synthetase (CPSase; EC 6.3.5.5), aspartate transcarbamylase (ATCase; EC 2.1.3.2) and dihydroorotase (DHOase; EC 3.5.2.3). The CPSase-function is accomplished in 2 steps, by a glutamine-dependent amidotransferase activity (GATase) that binds and cleaves glutamine to produce ammonia, followed by an ammonium-dependent carbamoyl phosphate synthetase, which reacts with the ammonia, hydrogencarbonate and ATP to form carbamoyl phosphate. The endogenously produced carbamoyl phosphate is sequestered and channeled to the ATCase active site. ATCase then catalyzes the formation of carbamoyl-L-aspartate from L-aspartate and carbamoyl phosphate. In the last step, DHOase catalyzes the cyclization of carbamoyl aspartate to dihydroorotate. The polypeptide is Multifunctional protein CAD (CAD) (Squalus acanthias (Spiny dogfish)).